Reading from the N-terminus, the 143-residue chain is Hemoglobin subunit alpha-2 (143 aa).

Serine 2 carries the N-acetylserine modification. The region spanning 2–143 is the Globin domain; it reads SLSTKDKDTV…LARALSEKYR (142 aa). Heme b-binding residues include histidine 60 and histidine 89.

Belongs to the globin family. Hb 2 is a heterotetramer of two alpha-2 and two beta chains. Red blood cells.

Involved in oxygen transport from gills to the various peripheral tissues. The protein is Hemoglobin subunit alpha-2 of Cottoperca gobio (Frogmouth).